Consider the following 374-residue polypeptide: 3-isopropylmalate dehydrogenase (374 aa).

NAD(+) is bound at residue 83–96; sequence GPKWDNLPPEIRPE. The substrate site is built by Arg104, Arg114, Arg142, and Asp231. 3 residues coordinate Mg(2+): Asp231, Asp255, and Asp259. 288–300 provides a ligand contact to NAD(+); it reads GSAPDIAGQNKAN.

Belongs to the isocitrate and isopropylmalate dehydrogenases family. LeuB type 1 subfamily. Homodimer. Mg(2+) serves as cofactor. Requires Mn(2+) as cofactor.

The protein resides in the cytoplasm. The enzyme catalyses (2R,3S)-3-isopropylmalate + NAD(+) = 4-methyl-2-oxopentanoate + CO2 + NADH. It functions in the pathway amino-acid biosynthesis; L-leucine biosynthesis; L-leucine from 3-methyl-2-oxobutanoate: step 3/4. Its function is as follows. Catalyzes the oxidation of 3-carboxy-2-hydroxy-4-methylpentanoate (3-isopropylmalate) to 3-carboxy-4-methyl-2-oxopentanoate. The product decarboxylates to 4-methyl-2 oxopentanoate. This is 3-isopropylmalate dehydrogenase from Carboxydothermus hydrogenoformans (strain ATCC BAA-161 / DSM 6008 / Z-2901).